A 248-amino-acid polypeptide reads, in one-letter code: MSVTMRQMLEAGVHFGHQTRFWNPRMAPFIFGHRNKIHIVNLEKSLPMFQEAQKFVRQLSANKGNVLFVGTKRAARDIVREEAQRAGMPYVDQRWLGGMLTNFKTVKQSIKRLNDLEAQIAEPGRLSKKEILTVQREVDKLNRSLGGIREMGGLPDALFIIDVGYQKGAVVEAKKLGIPVIGVVDTNNSPEGVDYVIPGNDDSARAIRLYARGMADAALEGRAQVISEIVGGEEFVEVEEEEGGVAAE.

It belongs to the universal ribosomal protein uS2 family.

In Thiobacillus denitrificans (strain ATCC 25259 / T1), this protein is Small ribosomal subunit protein uS2.